Reading from the N-terminus, the 721-residue chain is MASFKGFSANTVPVSKTRKDTSSLTATPGLRAPSMSSPVDMAQSREFLTKAIEHGSMSIPYQHVNVPKVDRKVVSLVVRPFSAGAFSISGVISPAHAYLLECLPQLEQAMAFVASPEAFQASDVAKRFTIKPGMSLQDAITAFINFVSAMLKMTVTRQNFDVIIAEIERLASSGVVNRTEEAKVADEELMLFGLDHRAPQQIDVSEPVGISRAVEIQTTNNVHLAPGLGNIDPEIYNEGRFMFMQHKPLAADQSYFTTETADYFKIYPTYDEHDGRMVDQKQSGLILCTKDEVLAEQTIFKLDVPDDKTVHLLDRDDDHVVARFTRVFIEDVAPSHHAAQRSNQRSLLDDLYANTQVVSVTPSALRWVIKHGVSDGIVNRKNVKICVGFDPLYTLATSNGLSLCSILMDEKLSVLNSACKMTLRSLLKTHRDLDLHRAFQRVISQSYASLMCYYHPSRKLAYGELLFMSSQSDTVDGIKLQLDASRQCHECPLLQQKIVELEKHLIVQKSASSDPTPVALQPLLSQLRELSSEVTRLQMDLSRTQAINTRLEADVKSAQSCSLDMYLKHHTCINSHVKEDELMDAVRIAPDVRQELMLKRKATRQEWWERIARETSTTFQSKIDELTLMNGKQAHEISELRDSVTNYEKQVAELVSTITQNQTTYQQELQALVAKNIELDALNQRQAKSVRITSSLLSATPIDAVDGASDLIDFSVPADEL.

The interval 1–13 (MASFKGFSANTVP) is interaction with sigma-NS. The RNA-binding stretch occupies residues 1–38 (MASFKGFSANTVPVSKTRKDTSSLTATPGLRAPSMSSP). The segment at 14-40 (VSKTRKDTSSLTATPGLRAPSMSSPVD) is interaction with mu-2. The segment at 17–37 (TRKDTSSLTATPGLRAPSMSS) is disordered. The segment at 471-721 (QSDTVDGIKL…IDFSVPADEL (251 aa)) is involved in the formation of factory-like inclusions. Coiled-coil stretches lie at residues 523-556 (LLSQLRELSSEVTRLQMDLSRTQAINTRLEADVK) and 632-686 (KQAH…NQRQ).

The protein belongs to the orthoreovirus mu-NS protein family. Interacts with mu-2. Interacts with sigma-NS; in viral factories. Interacts with the inner capsid proteins lambda-1 and sigma-2, and outer capsid protein lambda-2; in viral factories. The N-terminus is blocked.

The protein resides in the host cytoplasm. Its function is as follows. Non-structural protein implicated with protein sigma-NS in forming the matrix of viral factories, which are large inclusions in the host cytoplasm where replication intermediates are assembled and viral RNA replication takes place. Together with mu-2, recruits the other core proteins to these factories. This Mammalia (T2J) protein is Protein mu-NS (M3).